The chain runs to 566 residues: Glutamate--tRNA ligase (566 aa).

A 'HIGH' region motif is present at residues Pro-105–Asn-115.

Belongs to the class-I aminoacyl-tRNA synthetase family. Glutamate--tRNA ligase type 2 subfamily.

The protein localises to the cytoplasm. It catalyses the reaction tRNA(Glu) + L-glutamate + ATP = L-glutamyl-tRNA(Glu) + AMP + diphosphate. Its function is as follows. Catalyzes the attachment of glutamate to tRNA(Glu) in a two-step reaction: glutamate is first activated by ATP to form Glu-AMP and then transferred to the acceptor end of tRNA(Glu). In Sulfurisphaera tokodaii (strain DSM 16993 / JCM 10545 / NBRC 100140 / 7) (Sulfolobus tokodaii), this protein is Glutamate--tRNA ligase.